Here is a 184-residue protein sequence, read N- to C-terminus: uncharacterized protein (184 aa).

Positions 1 to 24 (MGISDQINSNLSSQSPFTVSTNPS) are disordered.

This is an uncharacterized protein from Dictyostelium discoideum (Social amoeba).